We begin with the raw amino-acid sequence, 41 residues long: Large ribosomal subunit protein bL36 (41 aa).

The protein belongs to the bacterial ribosomal protein bL36 family.

The protein is Large ribosomal subunit protein bL36 of Gluconacetobacter diazotrophicus (strain ATCC 49037 / DSM 5601 / CCUG 37298 / CIP 103539 / LMG 7603 / PAl5).